We begin with the raw amino-acid sequence, 288 residues long: Bifunctional protein FolD (288 aa).

Residues 165–167 (GRS) and Ser190 each bind NADP(+).

Belongs to the tetrahydrofolate dehydrogenase/cyclohydrolase family. In terms of assembly, homodimer.

It catalyses the reaction (6R)-5,10-methylene-5,6,7,8-tetrahydrofolate + NADP(+) = (6R)-5,10-methenyltetrahydrofolate + NADPH. It carries out the reaction (6R)-5,10-methenyltetrahydrofolate + H2O = (6R)-10-formyltetrahydrofolate + H(+). The protein operates within one-carbon metabolism; tetrahydrofolate interconversion. Functionally, catalyzes the oxidation of 5,10-methylenetetrahydrofolate to 5,10-methenyltetrahydrofolate and then the hydrolysis of 5,10-methenyltetrahydrofolate to 10-formyltetrahydrofolate. This chain is Bifunctional protein FolD, found in Bdellovibrio bacteriovorus (strain ATCC 15356 / DSM 50701 / NCIMB 9529 / HD100).